The following is a 374-amino-acid chain: DNA replication and repair protein RecF (374 aa).

Gly-30–Thr-37 is an ATP binding site.

It belongs to the RecF family.

It is found in the cytoplasm. Its function is as follows. The RecF protein is involved in DNA metabolism; it is required for DNA replication and normal SOS inducibility. RecF binds preferentially to single-stranded, linear DNA. It also seems to bind ATP. The protein is DNA replication and repair protein RecF of Pediococcus pentosaceus (strain ATCC 25745 / CCUG 21536 / LMG 10740 / 183-1w).